Here is a 213-residue protein sequence, read N- to C-terminus: Protein-L-isoaspartate O-methyltransferase (213 aa).

Ser64 is an active-site residue.

Belongs to the methyltransferase superfamily. L-isoaspartyl/D-aspartyl protein methyltransferase family.

The protein resides in the cytoplasm. The enzyme catalyses [protein]-L-isoaspartate + S-adenosyl-L-methionine = [protein]-L-isoaspartate alpha-methyl ester + S-adenosyl-L-homocysteine. Functionally, catalyzes the methyl esterification of L-isoaspartyl residues in peptides and proteins that result from spontaneous decomposition of normal L-aspartyl and L-asparaginyl residues. It plays a role in the repair and/or degradation of damaged proteins. This Flavobacterium johnsoniae (strain ATCC 17061 / DSM 2064 / JCM 8514 / BCRC 14874 / CCUG 350202 / NBRC 14942 / NCIMB 11054 / UW101) (Cytophaga johnsonae) protein is Protein-L-isoaspartate O-methyltransferase.